A 203-amino-acid chain; its full sequence is Probable proteasome subunit beta type-1 (203 aa).

A propeptide spans 1–10 (removed in mature form); sequence MMSNEKEMTG. T11 acts as the Nucleophile in catalysis.

The protein belongs to the peptidase T1B family. The 26S proteasome consists of a 20S proteasome core and two 19S regulatory subunits. The 20S proteasome core is composed of 28 subunits that are arranged in four stacked rings, resulting in a barrel-shaped structure. The two end rings are each formed by seven alpha subunits, and the two central rings are each formed by seven beta subunits. The catalytic chamber with the active sites is on the inside of the barrel.

The protein localises to the cytoplasm. It is found in the nucleus. The enzyme catalyses Cleavage of peptide bonds with very broad specificity.. In terms of biological role, the proteasome degrades poly-ubiquitinated proteins in the cytoplasm and in the nucleus. It is essential for the regulated turnover of proteins and for the removal of misfolded proteins. The proteasome is a multicatalytic proteinase complex that is characterized by its ability to cleave peptides with Arg, Phe, Tyr, Leu, and Glu adjacent to the leaving group at neutral or slightly basic pH. It has an ATP-dependent proteolytic activity. In Encephalitozoon cuniculi (strain GB-M1) (Microsporidian parasite), this protein is Probable proteasome subunit beta type-1 (PRE3).